We begin with the raw amino-acid sequence, 118 residues long: MSGTRPAARRTNLTAAQNVVRSVDAEERIAWVSKALCRTTDPDELFVRGAAQRKAAVICRHCPVMQECAADALDNKVEFGVWGGMTERQRRALLKQHPEVVSWSDYLEKRKRRTGTAG.

One can recognise a 4Fe-4S Wbl-type domain in the interval 36-92 (LCRTTDPDELFVRGAAQRKAAVICRHCPVMQECAADALDNKVEFGVWGGMTERQRRA). Residues Cys37, Cys59, Cys62, and Cys68 each coordinate [4Fe-4S] cluster. Intrachain disulfides connect Cys37/Cys68 and Cys59/Cys62.

It belongs to the WhiB family. The cofactor is [4Fe-4S] cluster. The Fe-S cluster can be nitrosylated by nitric oxide (NO). In terms of processing, upon Fe-S cluster removal intramolecular disulfide bonds are formed.

The protein localises to the cytoplasm. Functionally, acts as a transcriptional regulator. Probably redox-responsive. The apo- but not holo-form probably binds DNA. This chain is Transcriptional regulator WhiB4 (whiB4), found in Mycobacterium tuberculosis (strain CDC 1551 / Oshkosh).